Consider the following 224-residue polypeptide: Ras-related protein Rab-11C (224 aa).

17 to 24 is a binding site for GTP; sequence GDSAVGKS. Positions 39 to 47 match the Effector region motif; that stretch reads TKATIGVDF. GTP-binding positions include 65–69 and 123–126; these read DTAGQ and NKSD. A disordered region spans residues 194 to 224; sequence QGKKLTPLSDPAPQLTANTTSTHQEKKSGCC. 2 S-geranylgeranyl cysteine lipidation sites follow: Cys223 and Cys224.

Belongs to the small GTPase superfamily. Rab family.

Its subcellular location is the membrane. The sequence is that of Ras-related protein Rab-11C (rab11C) from Dictyostelium discoideum (Social amoeba).